We begin with the raw amino-acid sequence, 355 residues long: Protein RecA (355 aa).

ATP is bound at residue 65 to 72 (GPESSGKT).

This sequence belongs to the RecA family.

Its subcellular location is the cytoplasm. Can catalyze the hydrolysis of ATP in the presence of single-stranded DNA, the ATP-dependent uptake of single-stranded DNA by duplex DNA, and the ATP-dependent hybridization of homologous single-stranded DNAs. It interacts with LexA causing its activation and leading to its autocatalytic cleavage. The chain is Protein RecA from Pseudomonas putida (strain ATCC 47054 / DSM 6125 / CFBP 8728 / NCIMB 11950 / KT2440).